A 154-amino-acid polypeptide reads, in one-letter code: Transcriptional repressor NrdR (154 aa).

A zinc finger lies at 3 to 34 (CPFCGANDTKVIDSRLVAEGEQVRRRRECLAC). The ATP-cone domain maps to 49-139 (PRLIKTDGSR…VYRRFQDLNE (91 aa)).

The protein belongs to the NrdR family. It depends on Zn(2+) as a cofactor.

Functionally, negatively regulates transcription of bacterial ribonucleotide reductase nrd genes and operons by binding to NrdR-boxes. This chain is Transcriptional repressor NrdR, found in Pseudomonas fluorescens (strain Pf0-1).